Consider the following 1581-residue polypeptide: Laminin subunit gamma-3 (1581 aa).

Positions Met1 to Gly28 are cleaved as a signal peptide. Positions Arg40–Arg279 constitute a Laminin N-terminal domain. The N-linked (GlcNAc...) asparagine glycan is linked to Asn128. 16 cysteine pairs are disulfide-bonded: Cys280-Cys289, Cys282-Cys299, Cys301-Cys310, Cys313-Cys333, Cys336-Cys345, Cys338-Cys361, Cys364-Cys373, Cys376-Cys389, Cys392-Cys404, Cys394-Cys410, Cys412-Cys421, Cys424-Cys436, Cys439-Cys450, Cys441-Cys457, Cys459-Cys468, and Cys471-Cys486. Laminin EGF-like domains follow at residues Cys280–Pro335, Cys336–Pro391, Cys392–Pro438, and Cys439–Ser488. N-linked (GlcNAc...) asparagine glycosylation occurs at Asn304. Asn337 carries N-linked (GlcNAc...) asparagine glycosylation. One can recognise a Laminin EGF-like 5; first part domain in the interval Cys489 to Cys498. One can recognise a Laminin IV type A domain in the interval His508–Thr684. Asn640 carries N-linked (GlcNAc...) asparagine glycosylation. In terms of domain architecture, Laminin EGF-like 5; second part spans Cys685–Pro718. Intrachain disulfides connect Cys719/Cys727, Cys721/Cys734, Cys736/Cys745, Cys748/Cys764, Cys767/Cys775, Cys769/Cys786, Cys789/Cys798, Cys801/Cys819, Cys822/Cys836, Cys824/Cys843, Cys846/Cys855, Cys858/Cys875, Cys878/Cys891, Cys880/Cys898, Cys900/Cys909, Cys912/Cys925, Cys928/Cys940, Cys930/Cys947, Cys949/Cys958, Cys961/Cys973, Cys976/Cys988, Cys978/Cys994, Cys996/Cys1005, and Cys1008/Cys1021. 6 consecutive Laminin EGF-like domains span residues Cys719–Pro766, Cys767–Arg821, Cys822–Pro877, Cys878–Ser927, Cys928–Asp975, and Cys976–Cys1024. An N-linked (GlcNAc...) asparagine glycan is attached at Asn849. A glycan (N-linked (GlcNAc...) asparagine) is linked at Asn991. The segment at Pro1025–Ser1581 is domain II and I. Coiled coils occupy residues Ala1029–Glu1046 and Val1112–Leu1153. Asn1162 and Asn1196 each carry an N-linked (GlcNAc...) asparagine glycan. Positions Arg1208–Leu1231 form a coiled coil. N-linked (GlcNAc...) asparagine glycosylation is present at Asn1320. The tract at residues Lys1382–Ser1413 is disordered. Coiled coils occupy residues Ala1438–Val1468 and Ala1510–Leu1575. The N-linked (GlcNAc...) asparagine glycan is linked to Asn1514.

Laminin is a complex glycoprotein, consisting of three different polypeptide chains (alpha, beta, gamma), which are bound to each other by disulfide bonds into a cross-shaped molecule comprising one long and three short arms with globules at each end. Gamma-3 is a subunit of laminin-12 (laminin-213), laminin-14 (laminin-423) and laminin-15 (laminin-523). Strongly expressed in capillaries and arterioles of kidney as well as in interstitial Leydig cells of testis.

It is found in the secreted. The protein resides in the extracellular space. Its subcellular location is the extracellular matrix. The protein localises to the basement membrane. In terms of biological role, binding to cells via a high affinity receptor, laminin is thought to mediate the attachment, migration and organization of cells into tissues during embryonic development by interacting with other extracellular matrix components. In Mus musculus (Mouse), this protein is Laminin subunit gamma-3 (Lamc3).